The sequence spans 306 residues: Glutathione transport system permease protein GsiC (306 aa).

Residues 1 to 8 (MLNYVIKR) are Cytoplasmic-facing. A helical membrane pass occupies residues 9–29 (LLGLIPTLFIVSVLVFLFVHM). The Periplasmic portion of the chain corresponds to 30-102 (LPGDPARLIA…SRFMPTLWLT (73 aa)). Positions 95–292 (FMPTLWLTIT…LEFILINLVV (198 aa)) constitute an ABC transmembrane type-1 domain. A helical membrane pass occupies residues 103-123 (ITSMVWAVIFGMAAGIIAAVW). Residues 124–134 (RNRWPDRLSMT) are Cytoplasmic-facing. Residues 135–155 (IAVSGISFPAFALGMLLIQVF) traverse the membrane as a helical segment. Topologically, residues 156–168 (SVELGWLPTVGAD) are periplasmic. The helical transmembrane segment at 169–189 (SWQHYILPSLTLGAAVAAVMA) threads the bilayer. Residues 190-228 (RFTRASFVDVLSEDYMRTARAKGVSETWVVLKHGLRNAM) are Cytoplasmic-facing. Residues 229–249 (IPVVTMMGLQFGFLLGGSIVV) form a helical membrane-spanning segment. The Periplasmic segment spans residues 250–277 (EKVFNWPGLGRLLVDSVEMRDYPVIQAE). Residues 278 to 298 (ILLFSLEFILINLVVDVLYAA) traverse the membrane as a helical segment. Topologically, residues 299-306 (INPAIRYK) are cytoplasmic.

It belongs to the binding-protein-dependent transport system permease family. The complex is composed of two ATP-binding proteins (GsiA), two transmembrane proteins (GsiC and GsiD) and a solute-binding protein (GsiB).

It localises to the cell inner membrane. Its function is as follows. Part of the ABC transporter complex GsiABCD involved in glutathione import. Probably responsible for the translocation of the substrate across the membrane. The chain is Glutathione transport system permease protein GsiC from Escherichia coli O6:H1 (strain CFT073 / ATCC 700928 / UPEC).